Reading from the N-terminus, the 645-residue chain is Dictomallein-like protein (645 aa).

Residues methionine 1–alanine 13 form the signal peptide. The interval cysteine 19–alanine 55 is disordered. Positions proline 177–methionine 448 constitute a Peptidase M66 domain. A Zn(2+)-binding site is contributed by histidine 333. Glutamate 334 is a catalytic residue. Zn(2+) contacts are provided by histidine 337 and histidine 343.

It belongs to the dictomallein family. The cofactor is Zn(2+).

The protein localises to the secreted. This chain is Dictomallein-like protein (dtmL), found in Hahella chejuensis (strain KCTC 2396).